A 179-amino-acid polypeptide reads, in one-letter code: Putative 5'(3')-deoxyribonucleotidase (179 aa).

Catalysis depends on Asp-9, which acts as the Nucleophile. Positions 9, 11, and 135 each coordinate Mg(2+). Asp-11 serves as the catalytic Proton donor.

Belongs to the 5'(3')-deoxyribonucleotidase family. Requires Mg(2+) as cofactor.

In terms of biological role, dephosphorylates the 5' and 2'(3')-phosphates of deoxyribonucleotides. This is Putative 5'(3')-deoxyribonucleotidase from Staphylococcus epidermidis (strain ATCC 12228 / FDA PCI 1200).